A 294-amino-acid chain; its full sequence is MQPRRQRLPAPWSGPRGPRPTAPLLALLLLLAPVAAPAGSGDPDDPGQPQDAGVPRRLLQQAARAALHFFNFRSGSPSALRVLAEVQEGRAWINPKEGCKVHVVFSTERYNPESLLQEGEGRLGKCSARVFFKNQKPRPTINVTCTRLIEKKKRQQEDYLLYKQMKQLKNPLEIVSIPDNHGHIDPSLRLIWDLAFLGSSYVMWEMTTQVSHYYLAQLTSVRQWKTNDDTIDFDYTVLLHELSTQEIIPCRIHLVWYPGKPLKVKYHCQELQTPEEASGTEEGSAVVPTELSNF.

Residues 1–20 (MQPRRQRLPAPWSGPRGPRP) are Lumenal-facing. The chain crosses the membrane as a helical; Signal-anchor for type III membrane protein span at residues 21–42 (TAPLLALLLLLAPVAAPAGSGD). Cystatin LXN-type domains lie at 38 to 153 (AGSG…EKKK) and 173 to 276 (EIVS…TPEE). O-linked (Xyl...) (chondroitin sulfate) serine glycosylation is present at serine 40. Over 43–294 (PDDPGQPQDA…AVVPTELSNF (252 aa)) the chain is Cytoplasmic. The segment at 273–294 (TPEEASGTEEGSAVVPTELSNF) is disordered.

It belongs to the protease inhibitor I47 (latexin) family. In terms of assembly, interacts with AGBL2, KIF11 and MAPRE1. Post-translationally, not N-glycosylated. O-glycosylated; contains chondroitin sulfate. Detected in urine (at protein level).

Its subcellular location is the membrane. The protein localises to the secreted. Its function is as follows. Inhibitor of the cytoplasmic carboxypeptidase AGBL2, may regulate the alpha-tubulin tyrosination cycle. The polypeptide is Retinoic acid receptor responder protein 1 (RARRES1) (Homo sapiens (Human)).